A 291-amino-acid polypeptide reads, in one-letter code: ATP synthase gamma chain (291 aa).

It belongs to the ATPase gamma chain family. F-type ATPases have 2 components, CF(1) - the catalytic core - and CF(0) - the membrane proton channel. CF(1) has five subunits: alpha(3), beta(3), gamma(1), delta(1), epsilon(1). CF(0) has three main subunits: a, b and c.

Its subcellular location is the cell inner membrane. Functionally, produces ATP from ADP in the presence of a proton gradient across the membrane. The gamma chain is believed to be important in regulating ATPase activity and the flow of protons through the CF(0) complex. In Chlorobium phaeobacteroides (strain DSM 266 / SMG 266 / 2430), this protein is ATP synthase gamma chain.